A 273-amino-acid chain; its full sequence is MNNRVHQGHLARKRFGQNFLNDQFVIDSIVSAINPQKGQAMVEIGPGLAALTEPVGERLDQLTVIELDRDLAARLQTHPFLGPKLTIYQQDAMTMNFGELAEKMGQPLRVFGNLPYNISTPLMFHLFSYTDAIADMHFMLQKEVVNRLVAGPNSKAYGRLSVMAQYYCQVIPVLEVPPSAFTPPPKVDSAVVRLVPHRTMPYPVKEVRVLSRITTEAFNQRRKTIRNSLGNLFSVEVLTELGVDPAVRAENISVEQYCKMANWLSNNLPSKES.

S-adenosyl-L-methionine contacts are provided by N18, L20, G45, E66, D91, and N113.

This sequence belongs to the class I-like SAM-binding methyltransferase superfamily. rRNA adenine N(6)-methyltransferase family. RsmA subfamily.

The protein resides in the cytoplasm. The catalysed reaction is adenosine(1518)/adenosine(1519) in 16S rRNA + 4 S-adenosyl-L-methionine = N(6)-dimethyladenosine(1518)/N(6)-dimethyladenosine(1519) in 16S rRNA + 4 S-adenosyl-L-homocysteine + 4 H(+). In terms of biological role, specifically dimethylates two adjacent adenosines (A1518 and A1519) in the loop of a conserved hairpin near the 3'-end of 16S rRNA in the 30S particle. May play a critical role in biogenesis of 30S subunits. The chain is Ribosomal RNA small subunit methyltransferase A from Klebsiella pneumoniae (strain 342).